The primary structure comprises 570 residues: Peptidyl-prolyl cis-trans isomerase FKBP9 (570 aa).

The signal sequence occupies residues 1–24 (MAFGARGWRRWSLLLLLLWVTGQA). PPIase FKBP-type domains are found at residues 54-142 (GDFV…VDIW), 166-254 (SDFV…LDLH), 278-365 (GDFL…IDFH), and 389-477 (GDYL…LELV). 4 N-linked (GlcNAc...) asparagine glycosylation sites follow: Asn-174, Asn-286, Asn-302, and Asn-397. EF-hand domains are found at residues 488-523 (WNGE…QVAS) and 533-568 (NAEM…TKHD). Ca(2+) is bound by residues Asp-501, Asp-503, Asn-505, Glu-507, Glu-512, Asp-546, Asn-548, Asp-550, Lys-552, and Glu-557. The short motif at 567 to 570 (HDEL) is the Prevents secretion from ER element.

Phosphorylated.

Its subcellular location is the endoplasmic reticulum lumen. It catalyses the reaction [protein]-peptidylproline (omega=180) = [protein]-peptidylproline (omega=0). Its activity is regulated as follows. Inhibited by FK506. In terms of biological role, PPIases accelerate the folding of proteins during protein synthesis. The polypeptide is Peptidyl-prolyl cis-trans isomerase FKBP9 (Fkbp9) (Rattus norvegicus (Rat)).